Consider the following 137-residue polypeptide: Large ribosomal subunit protein uL16 (137 aa).

It belongs to the universal ribosomal protein uL16 family. Part of the 50S ribosomal subunit.

Its function is as follows. Binds 23S rRNA and is also seen to make contacts with the A and possibly P site tRNAs. The protein is Large ribosomal subunit protein uL16 of Methylorubrum extorquens (strain CM4 / NCIMB 13688) (Methylobacterium extorquens).